The following is a 367-amino-acid chain: Heme A synthase (367 aa).

5 helical membrane-spanning segments follow: residues 12–32 (GAVRTWLYVVAALVVAMVAVG), 99–119 (LLGRVIGLVFFLPLILFWWQG), 127–147 (LGLLGLGLLGGLQGAIGWIMV), 163–183 (LALHLTTASLILAGLVWLAAG), and 198–218 (ATALLLPILVLVQIFLGGLVA). H264 is a binding site for heme. 3 helical membrane-spanning segments follow: residues 266-286 (VTAYLVFVVAVLHAVDARLTG), 296-316 (GVVILVLAQMALGIATLLLAV), and 317-337 (PLWAALAHQVLAMAVLTMATV). Residue H324 participates in heme binding.

The protein belongs to the COX15/CtaA family. Type 2 subfamily. Interacts with CtaB. Heme b is required as a cofactor.

It localises to the cell membrane. It carries out the reaction Fe(II)-heme o + 2 A + H2O = Fe(II)-heme a + 2 AH2. It functions in the pathway porphyrin-containing compound metabolism; heme A biosynthesis; heme A from heme O: step 1/1. Catalyzes the conversion of heme O to heme A by two successive hydroxylations of the methyl group at C8. The first hydroxylation forms heme I, the second hydroxylation results in an unstable dihydroxymethyl group, which spontaneously dehydrates, resulting in the formyl group of heme A. The chain is Heme A synthase from Methylobacterium radiotolerans (strain ATCC 27329 / DSM 1819 / JCM 2831 / NBRC 15690 / NCIMB 10815 / 0-1).